A 559-amino-acid chain; its full sequence is MARRAAAGLLRRHLGPLAAGETLQARGMYPKQYGAANHAFSRFYSIQGQQRSLYGFRTNVETDDTQQSARMNFEVQKRSFSSAAAHVQRNPAYSVLNSDDVSYFKSILGDSGVVQDEDRVSVANMDWMGKYKGSSQLLLLPKSTAEVSKILSYCNSRRLAVVPQGGNTGLVGGSVPVYDEVIISLGGMDKIITFDNVNGILTCEAGCVLENLSSYVENKGFIMPLDLGAKGSCHIGGNISTNAGGLRFIRYGSLHGSVLGLEVVLADGTVLDMLTTLRKDNTGYDLKHLFIGSEGSLGIVTKIAILTPAKLPSTNVAFLSCNDYISCQKLLLAARRSLGEILSAFEFMDRHCINLAMKYLEGVHNPLPVSPFNFYVLIETTGSDESYDKAKLEAFLLRSMEDGLVADGVIAQDISQASNFWRIREGISEASVKVGAVYKYDLSIPVEKLYDIVEEMRSRVGDMGQVLGYGHLGDGNLHLNILSTKYSDKMLAQIEPFVYEWTSKQRGSISAEHGLGLMKAEKIHYSKSSEAVQLMASIKKLLDPNSILNPYKVLPQSVL.

A mitochondrion-targeting transit peptide spans 1-80 (MARRAAAGLL…MNFEVQKRSF (80 aa)). The FAD-binding PCMH-type domain maps to 131–310 (YKGSSQLLLL…TKIAILTPAK (180 aa)).

This sequence belongs to the FAD-binding oxidoreductase/transferase type 4 family. Homodimer. FAD serves as cofactor.

Its subcellular location is the mitochondrion. The enzyme catalyses (R)-2-hydroxyglutarate + A = 2-oxoglutarate + AH2. Catalyzes the oxidation of D-2-hydroxyglutarate to alpha-ketoglutarate. This Oryza sativa subsp. japonica (Rice) protein is Probable D-2-hydroxyglutarate dehydrogenase, mitochondrial (D2HGDH).